A 545-amino-acid polypeptide reads, in one-letter code: CTP synthase (545 aa).

The amidoligase domain stretch occupies residues 1-266; sequence MTTNYIFVTG…DDYICKRFSL (266 aa). Ser14 is a CTP binding site. Ser14 serves as a coordination point for UTP. ATP is bound by residues 15–20 and Asp72; that span reads SLGKGI. Mg(2+) is bound by residues Asp72 and Glu140. CTP is bound by residues 147 to 149, 187 to 192, and Lys223; these read DIE and KTKPTQ. Residues 187–192 and Lys223 contribute to the UTP site; that span reads KTKPTQ. 239–241 serves as a coordination point for ATP; that stretch reads KDV. One can recognise a Glutamine amidotransferase type-1 domain in the interval 291-542; that stretch reads TIGMVGKYIE…VKAASEYQKR (252 aa). Residue Gly352 coordinates L-glutamine. The Nucleophile; for glutamine hydrolysis role is filled by Cys379. Residues 380-383, Glu403, and Arg470 contribute to the L-glutamine site; that span reads LGMQ. Active-site residues include His515 and Glu517.

It belongs to the CTP synthase family. Homotetramer.

It catalyses the reaction UTP + L-glutamine + ATP + H2O = CTP + L-glutamate + ADP + phosphate + 2 H(+). It carries out the reaction L-glutamine + H2O = L-glutamate + NH4(+). The enzyme catalyses UTP + NH4(+) + ATP = CTP + ADP + phosphate + 2 H(+). It functions in the pathway pyrimidine metabolism; CTP biosynthesis via de novo pathway; CTP from UDP: step 2/2. Its activity is regulated as follows. Allosterically activated by GTP, when glutamine is the substrate; GTP has no effect on the reaction when ammonia is the substrate. The allosteric effector GTP functions by stabilizing the protein conformation that binds the tetrahedral intermediate(s) formed during glutamine hydrolysis. Inhibited by the product CTP, via allosteric rather than competitive inhibition. In terms of biological role, catalyzes the ATP-dependent amination of UTP to CTP with either L-glutamine or ammonia as the source of nitrogen. Regulates intracellular CTP levels through interactions with the four ribonucleotide triphosphates. In Klebsiella pneumoniae (strain 342), this protein is CTP synthase.